The sequence spans 414 residues: Phosphoglycerate kinase (414 aa).

Substrate contacts are provided by residues 19–21 (DLN), Arg34, 57–60 (HQSK), Arg114, and Arg154. ATP-binding positions include Glu332 and 358-361 (GGHS).

The protein belongs to the phosphoglycerate kinase family. Monomer.

Its subcellular location is the cytoplasm. The enzyme catalyses (2R)-3-phosphoglycerate + ATP = (2R)-3-phospho-glyceroyl phosphate + ADP. It participates in carbohydrate degradation; glycolysis; pyruvate from D-glyceraldehyde 3-phosphate: step 2/5. The chain is Phosphoglycerate kinase from Thermococcus onnurineus (strain NA1).